Here is a 318-residue protein sequence, read N- to C-terminus: Methionyl-tRNA formyltransferase (318 aa).

(6S)-5,6,7,8-tetrahydrofolate is bound at residue 110-113 (SLLP).

The protein belongs to the Fmt family.

It catalyses the reaction L-methionyl-tRNA(fMet) + (6R)-10-formyltetrahydrofolate = N-formyl-L-methionyl-tRNA(fMet) + (6S)-5,6,7,8-tetrahydrofolate + H(+). Attaches a formyl group to the free amino group of methionyl-tRNA(fMet). The formyl group appears to play a dual role in the initiator identity of N-formylmethionyl-tRNA by promoting its recognition by IF2 and preventing the misappropriation of this tRNA by the elongation apparatus. This chain is Methionyl-tRNA formyltransferase, found in Geobacillus sp. (strain WCH70).